We begin with the raw amino-acid sequence, 161 residues long: uncharacterized protein (161 aa).

This is an uncharacterized protein from Encephalitozoon cuniculi (strain GB-M1) (Microsporidian parasite).